The sequence spans 564 residues: Dihydroxy-acid dehydratase (564 aa).

Residue Cys51 coordinates [2Fe-2S] cluster. Position 83 (Asp83) interacts with Mg(2+). Cys124 contributes to the [2Fe-2S] cluster binding site. 2 residues coordinate Mg(2+): Asp125 and Lys126. Lys126 bears the N6-carboxylysine mark. Position 196 (Cys196) interacts with [2Fe-2S] cluster. Glu448 contributes to the Mg(2+) binding site. Catalysis depends on Ser474, which acts as the Proton acceptor.

Belongs to the IlvD/Edd family. As to quaternary structure, homodimer. [2Fe-2S] cluster is required as a cofactor. Mg(2+) serves as cofactor.

The catalysed reaction is (2R)-2,3-dihydroxy-3-methylbutanoate = 3-methyl-2-oxobutanoate + H2O. It carries out the reaction (2R,3R)-2,3-dihydroxy-3-methylpentanoate = (S)-3-methyl-2-oxopentanoate + H2O. It participates in amino-acid biosynthesis; L-isoleucine biosynthesis; L-isoleucine from 2-oxobutanoate: step 3/4. Its pathway is amino-acid biosynthesis; L-valine biosynthesis; L-valine from pyruvate: step 3/4. Functionally, functions in the biosynthesis of branched-chain amino acids. Catalyzes the dehydration of (2R,3R)-2,3-dihydroxy-3-methylpentanoate (2,3-dihydroxy-3-methylvalerate) into 2-oxo-3-methylpentanoate (2-oxo-3-methylvalerate) and of (2R)-2,3-dihydroxy-3-methylbutanoate (2,3-dihydroxyisovalerate) into 2-oxo-3-methylbutanoate (2-oxoisovalerate), the penultimate precursor to L-isoleucine and L-valine, respectively. The polypeptide is Dihydroxy-acid dehydratase (Pyrobaculum calidifontis (strain DSM 21063 / JCM 11548 / VA1)).